Reading from the N-terminus, the 157-residue chain is Crossover junction endodeoxyribonuclease RuvC (157 aa).

Catalysis depends on residues D7, E67, and D140. Mg(2+)-binding residues include D7, E67, and D140.

It belongs to the RuvC family. As to quaternary structure, homodimer which binds Holliday junction (HJ) DNA. The HJ becomes 2-fold symmetrical on binding to RuvC with unstacked arms; it has a different conformation from HJ DNA in complex with RuvA. In the full resolvosome a probable DNA-RuvA(4)-RuvB(12)-RuvC(2) complex forms which resolves the HJ. Mg(2+) serves as cofactor.

The protein resides in the cytoplasm. The catalysed reaction is Endonucleolytic cleavage at a junction such as a reciprocal single-stranded crossover between two homologous DNA duplexes (Holliday junction).. Its function is as follows. The RuvA-RuvB-RuvC complex processes Holliday junction (HJ) DNA during genetic recombination and DNA repair. Endonuclease that resolves HJ intermediates. Cleaves cruciform DNA by making single-stranded nicks across the HJ at symmetrical positions within the homologous arms, yielding a 5'-phosphate and a 3'-hydroxyl group; requires a central core of homology in the junction. The consensus cleavage sequence is 5'-(A/T)TT(C/G)-3'. Cleavage occurs on the 3'-side of the TT dinucleotide at the point of strand exchange. HJ branch migration catalyzed by RuvA-RuvB allows RuvC to scan DNA until it finds its consensus sequence, where it cleaves and resolves the cruciform DNA. The polypeptide is Crossover junction endodeoxyribonuclease RuvC (Rickettsia bellii (strain RML369-C)).